We begin with the raw amino-acid sequence, 139 residues long: Maximins 4/H3 type 7 (139 aa).

The first 18 residues, 1-18 (MNFKYIVAVSFLIASAYA), serve as a signal peptide directing secretion. Residues 19–43 (RSVQNDEQSLSQRDVLEEESLREIR) constitute a propeptide that is removed on maturation. N70 carries the post-translational modification Asparagine amide. The propeptide occupies 74 to 118 (TAEDHEVMKRLEAIMRDLDSLDYPEEASERETRGFNQDEIAKEKR). I138 is modified (isoleucine amide).

It belongs to the bombinin family. As to expression, expressed by the skin glands.

It is found in the secreted. Maximin-4 shows antibacterial activity against both Gram-positive and Gram-negative bacteria. It also shows antimicrobial activity against the fungus C.albicans, but not against A.flavus nor P.uticale. It has little hemolytic activity. It does not possess a significant cytotoxicity against tumor cell lines. It does not possess a significant anti-HIV activity. Functionally, maximin-H3 shows antibacterial activity against both Gram-positive and Gram-negative bacteria. It also shows antimicrobial activity against the fungus C.albicans. Shows strong hemolytic activity. This chain is Maximins 4/H3 type 7, found in Bombina maxima (Giant fire-bellied toad).